A 289-amino-acid chain; its full sequence is 1D-myo-inositol 2-acetamido-2-deoxy-alpha-D-glucopyranoside deacetylase 1 (289 aa).

The Zn(2+) site is built by His4, Asp7, and His140.

It belongs to the MshB deacetylase family. Zn(2+) is required as a cofactor.

It catalyses the reaction 1D-myo-inositol 2-acetamido-2-deoxy-alpha-D-glucopyranoside + H2O = 1D-myo-inositol 2-amino-2-deoxy-alpha-D-glucopyranoside + acetate. Functionally, catalyzes the deacetylation of 1D-myo-inositol 2-acetamido-2-deoxy-alpha-D-glucopyranoside (GlcNAc-Ins) in the mycothiol biosynthesis pathway. The protein is 1D-myo-inositol 2-acetamido-2-deoxy-alpha-D-glucopyranoside deacetylase 1 of Frankia alni (strain DSM 45986 / CECT 9034 / ACN14a).